A 117-amino-acid chain; its full sequence is Large ribosomal subunit protein uL18 (117 aa).

This sequence belongs to the universal ribosomal protein uL18 family. Part of the 50S ribosomal subunit; part of the 5S rRNA/L5/L18/L25 subcomplex. Contacts the 5S and 23S rRNAs.

This is one of the proteins that bind and probably mediate the attachment of the 5S RNA into the large ribosomal subunit, where it forms part of the central protuberance. This chain is Large ribosomal subunit protein uL18, found in Pasteurella multocida (strain Pm70).